The chain runs to 311 residues: Homoserine kinase (311 aa).

ATP is bound at residue 88–98; sequence PEGLGLGSSGA.

This sequence belongs to the GHMP kinase family. Homoserine kinase subfamily.

Its subcellular location is the cytoplasm. The enzyme catalyses L-homoserine + ATP = O-phospho-L-homoserine + ADP + H(+). It functions in the pathway amino-acid biosynthesis; L-threonine biosynthesis; L-threonine from L-aspartate: step 4/5. Catalyzes the ATP-dependent phosphorylation of L-homoserine to L-homoserine phosphate. This chain is Homoserine kinase, found in Saccharolobus solfataricus (strain ATCC 35092 / DSM 1617 / JCM 11322 / P2) (Sulfolobus solfataricus).